The following is a 345-amino-acid chain: MAETDSFLHLARPLGPMAVGSAPTTAPLNVVIHPQALFSILDHSLRRNADQERVIGTLLGTRSEDGTEVEIRTTFAVGHTETTDQVEVDMEYQKQMLALHLKANPKEVLVGWYATSSELNTFSALIQNFYSGQGDGTFPHPAVHLTVSTEPGKDVETRAYISAPVGVTAERAADSAAFIPVPYEIRYGETEKSGLESIAAARDVESRAANIFTDIEALERAVEEVLGMIDRVSKYVESVIDEEAPASTALGQFLLNALALAPKVEPADIERDFNNHIQDVLVVSYLANTIRTQMELSNRLATAQLTLGGESGNAESGQRGGQRGGKGGRGGQQRTQDRSGEEARA.

One can recognise an MPN domain in the interval 30–166; that stretch reads VVIHPQALFS…TRAYISAPVG (137 aa). Residues 308–345 form a disordered region; sequence GGESGNAESGQRGGQRGGKGGRGGQQRTQDRSGEEARA. The segment covering 318–331 has biased composition (gly residues); the sequence is QRGGQRGGKGGRGG. Residues 335-345 are compositionally biased toward basic and acidic residues; it reads TQDRSGEEARA.

This sequence belongs to the eIF-3 subunit F family. As to quaternary structure, component of the eukaryotic translation initiation factor 3 (eIF-3) complex.

The protein resides in the cytoplasm. Functionally, component of the eukaryotic translation initiation factor 3 (eIF-3) complex, which is involved in protein synthesis of a specialized repertoire of mRNAs and, together with other initiation factors, stimulates binding of mRNA and methionyl-tRNAi to the 40S ribosome. The eIF-3 complex specifically targets and initiates translation of a subset of mRNAs involved in cell proliferation. In Aspergillus oryzae (strain ATCC 42149 / RIB 40) (Yellow koji mold), this protein is Eukaryotic translation initiation factor 3 subunit F.